A 123-amino-acid polypeptide reads, in one-letter code: uncharacterized protein (123 aa).

This is an uncharacterized protein from Saccharomyces cerevisiae (strain ATCC 204508 / S288c) (Baker's yeast).